The following is a 493-amino-acid chain: C2H2-type transcription factor ffmA (493 aa).

Low complexity predominate over residues 1-18 (MPMPQYTMQPQYPVSQPH). Disordered regions lie at residues 1–50 (MPMP…SRYP), 68–140 (TTVG…YPDG), and 164–202 (EPPR…KNTT). Composition is skewed to polar residues over residues 69–79 (TVGSLPPSTFL) and 192–202 (NGVNGTAKNTT). A C2H2-type 1 zinc finger spans residues 212-234 (FPCPHCNKTYLHAKHLKRHLLRH). The C2H2-type 2; degenerate zinc-finger motif lies at 240 to 265 (YMCVLCKDTFSRSDILKRHFQKCSIR). 2 stretches are compositionally biased toward polar residues: residues 288–307 (QAAA…TVPP) and 484–493 (ASTTLGGDGK). Disordered stretches follow at residues 288-316 (QAAA…GATF) and 468-493 (TTTA…GDGK).

It belongs to the krueppel C2H2-type zinc-finger protein family.

The protein localises to the nucleus. Functionally, transcription factor that acts in coordination with atrR to regulate the expression of the ABC-type multidrug transporter abcG1 and thus plays a role in azole susceptibility. Regulates the expression of genes involved in fermentation. Is able to promote expression from the yeast FLO11 promoter. The protein is C2H2-type transcription factor ffmA of Aspergillus fumigatus (strain CBS 144.89 / FGSC A1163 / CEA10) (Neosartorya fumigata).